The sequence spans 968 residues: Protein translocase subunit SecA (968 aa).

Residues glutamine 99, 117 to 121 (GEGKT), and aspartate 631 each bind ATP.

This sequence belongs to the SecA family. As to quaternary structure, monomer and homodimer. Part of the essential Sec protein translocation apparatus which comprises SecA, SecYEG and auxiliary proteins SecDF. Other proteins may also be involved.

It localises to the cell inner membrane. It is found in the cytoplasm. It catalyses the reaction ATP + H2O + cellular proteinSide 1 = ADP + phosphate + cellular proteinSide 2.. In terms of biological role, part of the Sec protein translocase complex. Interacts with the SecYEG preprotein conducting channel. Has a central role in coupling the hydrolysis of ATP to the transfer of proteins into and across the cell membrane, serving as an ATP-driven molecular motor driving the stepwise translocation of polypeptide chains across the membrane. This Chlamydia muridarum (strain MoPn / Nigg) protein is Protein translocase subunit SecA.